A 266-amino-acid polypeptide reads, in one-letter code: Killer cell lectin-like receptor 3 (266 aa).

The Cytoplasmic portion of the chain corresponds to 1 to 48 (MSEPEVTYSTVRLHKSSGLQKLVRHEETQGPREVGNRKCSAPWQLIVK). A helical; Signal-anchor for type II membrane protein membrane pass occupies residues 49-69 (ALGILCFLLLVTVAVLAVKIF). Residues 70 to 266 (QYNQHKQEIN…CGKKLDKFPD (197 aa)) are Extracellular-facing. 4 N-linked (GlcNAc...) asparagine glycosylation sites follow: Asn79, Asn87, Asn104, and Asn113. The interval 147 to 151 (WFCYS) is involved in dimerization. A disulfide bridge connects residues Cys149 and Cys154. The 109-residue stretch at 150-258 (YSTKCYYFIM…CNIPYYCICG (109 aa)) folds into the C-type lectin domain. N-linked (GlcNAc...) asparagine glycosylation is present at Asn160. Implicated in MHC class I binding regions lie at residues 160–162 (NKT), 195–196 (IP), 207–208 (KK), 224–233 (MKIRKMNFKS), and 240–245 (SKARIE). Disulfide bonds link Cys167-Cys255, Cys171-Cys257, and Cys236-Cys249.

Homodimer; disulfide-linked.

The protein resides in the membrane. Functionally, receptor on natural killer (NK) cells for class I MHC. The polypeptide is Killer cell lectin-like receptor 3 (Klra3) (Mus musculus (Mouse)).